The sequence spans 351 residues: V-type proton ATPase subunit d2 (351 aa).

It belongs to the V-ATPase V0D/AC39 subunit family. V-ATPase is a heteromultimeric enzyme composed of a peripheral catalytic V1 complex (components A to H) attached to an integral membrane V0 proton pore complex (components: a, c, c'', d and e).

It is found in the vacuole membrane. Functionally, subunit of the integral membrane V0 complex of vacuolar ATPase. Vacuolar ATPase is responsible for acidifying a variety of intracellular compartments in eukaryotic cells, thus providing most of the energy required for transport processes in the vacuolar system. The chain is V-type proton ATPase subunit d2 (VHA-d2) from Arabidopsis thaliana (Mouse-ear cress).